Here is a 486-residue protein sequence, read N- to C-terminus: MGEPGFFVTGDRAGGRSWCLRRVGMSAGWLLLEDGCEVTVGRGFGVTYQLVSKICPLMISRNHCVLKQNPEGQWTIMDNKSLNGVWLNRARLEPLSVYSIHQGDYIQLGVPLENKENAEYEYEVTEEDWETIYPCLSPKNDQVIEKNKELRTKRKFSLDELAGPGAEGPSNLKSKINKVSCESGQSVKSQGKGEVSSTPSENLDPKLTVLEPSKKTTGAPIYLGFPKVTEVHHEQTASNSSASQRGLQMFKVTMSRILRLKIQMQEKHEAVMNVKKQTQKGNSKKIVQMEQELLDLQSQLCAEQAQQQARVEQLEKTFQEEEQHLQDLEIAQGEEDLRQQLAQALQEHWALMEELNRSKKDFEAIIQAKNKELEQTKEEKEKVQAQKEEVLSHMNDVLENELQCIICSEYFIEAVTLNCAHSFCSYCINEWMKRKIECPICRKDIKSKTYSLVLDNCINKMVNNLSSEVKERRIVLIRERKVKRLF.

Residues 38–92 (VTVGRGFGVTYQLVSKICPLMISRNHCVLKQNPEGQWTIMDNKSLNGVWLNRARL) form the FHA domain. The interval 68–72 (QNPEG) is required for interaction with PIWIL1. Phosphoserine is present on Ser157. The span at 180-201 (SCESGQSVKSQGKGEVSSTPSE) shows a compositional bias: polar residues. The tract at residues 180–207 (SCESGQSVKSQGKGEVSSTPSENLDPKL) is disordered. Residues 404–442 (CIICSEYFIEAVTLNCAHSFCSYCINEWMKRKIECPICR) form an RING-type zinc finger.

The protein belongs to the RNF8 family. In terms of assembly, homodimer. Forms a E2-E3 ubiquitin ligase complex composed of the RNF8 homodimer and a E2 heterodimer of UBE2N and UBE2V2. Interacts with class III E2s, including UBE2E1, UBE2E2, and UBE2E3 and with UBE2N. Interacts with RXRA. Interacts (via FHA domain) with phosphorylated HERC2 (via C-terminus). Interacts with PIWIL1; leading to sequester RNF8 in the cytoplasm. Interacts with WRAP53/TCAB1. In terms of processing, autoubiquitinated through 'Lys-48' and 'Lys-63' of ubiquitin. 'Lys-63' polyubiquitination is mediated by UBE2N. 'Lys-29'-type polyubiquitination is also observed, but it doesn't require its own functional RING-type zinc finger.

The protein localises to the nucleus. It is found in the cytoplasm. Its subcellular location is the midbody. The protein resides in the chromosome. It localises to the telomere. It catalyses the reaction S-ubiquitinyl-[E2 ubiquitin-conjugating enzyme]-L-cysteine + [acceptor protein]-L-lysine = [E2 ubiquitin-conjugating enzyme]-L-cysteine + N(6)-ubiquitinyl-[acceptor protein]-L-lysine.. It functions in the pathway protein modification; protein ubiquitination. Its function is as follows. E3 ubiquitin-protein ligase that plays a key role in DNA damage signaling via 2 distinct roles: by mediating the 'Lys-63'-linked ubiquitination of histones H2A and H2AX and promoting the recruitment of DNA repair proteins at double-strand breaks (DSBs) sites, and by catalyzing 'Lys-48'-linked ubiquitination to remove target proteins from DNA damage sites. Following DNA DSBs, it is recruited to the sites of damage by ATM-phosphorylated MDC1 and catalyzes the 'Lys-63'-linked ubiquitination of histones H2A and H2AX, thereby promoting the formation of TP53BP1 and BRCA1 ionizing radiation-induced foci (IRIF). Also controls the recruitment of UIMC1-BRCC3 (RAP80-BRCC36) and PAXIP1/PTIP to DNA damage sites. Promotes the recruitment of NBN to DNA damage sites by catalyzing 'Lys-6'-linked ubiquitination of NBN. Also recruited at DNA interstrand cross-links (ICLs) sites and catalyzes 'Lys-63'-linked ubiquitination of histones H2A and H2AX, leading to recruitment of FAAP20 and Fanconi anemia (FA) complex, followed by interstrand cross-link repair. H2A ubiquitination also mediates the ATM-dependent transcriptional silencing at regions flanking DSBs in cis, a mechanism to avoid collision between transcription and repair intermediates. Promotes the formation of 'Lys-63'-linked polyubiquitin chains via interactions with the specific ubiquitin-conjugating UBE2N/UBC13 and ubiquitinates non-histone substrates such as PCNA. Substrates that are polyubiquitinated at 'Lys-63' are usually not targeted for degradation. Also catalyzes the formation of 'Lys-48'-linked polyubiquitin chains via interaction with the ubiquitin-conjugating UBE2L6/UBCH8, leading to degradation of substrate proteins such as CHEK2, JMJD2A/KDM4A and KU80/XRCC5: it is still unclear how the preference toward 'Lys-48'- versus 'Lys-63'-linked ubiquitination is regulated but it could be due to RNF8 ability to interact with specific E2 specific ligases. For instance, interaction with phosphorylated HERC2 promotes the association between RNF8 and UBE2N/UBC13 and favors the specific formation of 'Lys-63'-linked ubiquitin chains. Promotes non-homologous end joining (NHEJ) by promoting the 'Lys-48'-linked ubiquitination and degradation the of KU80/XRCC5. Following DNA damage, mediates the ubiquitination and degradation of JMJD2A/KDM4A in collaboration with RNF168, leading to unmask H4K20me2 mark and promote the recruitment of TP53BP1 at DNA damage sites. Following DNA damage, mediates the ubiquitination and degradation of POLD4/p12, a subunit of DNA polymerase delta. In the absence of POLD4, DNA polymerase delta complex exhibits higher proofreading activity. In addition to its function in damage signaling, also plays a role in higher-order chromatin structure by mediating extensive chromatin decondensation. Involved in the activation of ATM by promoting histone H2B ubiquitination, which indirectly triggers histone H4 'Lys-16' acetylation (H4K16ac), establishing a chromatin environment that promotes efficient activation of ATM kinase. Required in the testis, where it plays a role in the replacement of histones during spermatogenesis. At uncapped telomeres, promotes the joining of deprotected chromosome ends by inducing H2A ubiquitination and TP53BP1 recruitment, suggesting that it may enhance cancer development by aggravating telomere-induced genome instability in case of telomeric crisis. Promotes the assembly of RAD51 at DNA DSBs in the absence of BRCA1 and TP53BP1 Also involved in class switch recombination in immune system, via its role in regulation of DSBs repair. May be required for proper exit from mitosis after spindle checkpoint activation and may regulate cytokinesis. May play a role in the regulation of RXRA-mediated transcriptional activity. Not involved in RXRA ubiquitination by UBE2E2. The polypeptide is E3 ubiquitin-protein ligase RNF8 (Pongo abelii (Sumatran orangutan)).